We begin with the raw amino-acid sequence, 513 residues long: Laccase (513 aa).

4 consecutive Plastocyanin-like domains span residues P45–F81, K101–K178, W240–N318, and Q378–T509. Cu cation is bound by residues H105, H107, H153, and H155. 8 residues coordinate Cu cation: H419, H422, H424, H491, C492, H493, H497, and M502.

It belongs to the multicopper oxidase family. Monomer. The cofactor is Cu(2+).

The protein resides in the spore coat. It carries out the reaction 4 hydroquinone + O2 = 4 benzosemiquinone + 2 H2O. The catalysed reaction is 2 (4Z,15Z)-bilirubin IXalpha + O2 = 2 biliverdin IXalpha + 2 H2O. With respect to regulation, inhibited by azide. Its function is as follows. Multicopper oxidase that catalyzes the oxidation of a variety of substrates, including phenolic and non-phenolic compounds. Substrates include syringaldazine (SGZ), 2,6-dimethoxyphenol (2,6-DMP) and the non-phenolic compound 2,2'-azino-bis(3-ethylbenzothiazoline-6-sulfonic acid) (ABTS). Has no tyrosinase activity. Is implicated in the biosynthesis of a brownish pigment that characterizes sporulating colonies of B.subtilis, and which appears to be a melanin-like product and to confer protection against UV light. Functionally, in vitro, also shows strong bilirubin oxidase (BOD) activity, and can catalyze the oxidation of free bilirubin (UB), direct bilirubin (conjugated with glucuronic acid, DB) and ditaurobilirubin. The polypeptide is Laccase (Bacillus subtilis (strain 168)).